Consider the following 400-residue polypeptide: Diphosphomevalonate decarboxylase (400 aa).

The residue at position 2 (Ala-2) is an N-acetylalanine. (R)-5-diphosphomevalonate-binding positions include 23 to 26 (YWGK), Arg-78, 156 to 161 (SGSACR), and Thr-212.

This sequence belongs to the diphosphomevalonate decarboxylase family. In terms of assembly, homodimer.

Its subcellular location is the cytoplasm. The catalysed reaction is (R)-5-diphosphomevalonate + ATP = isopentenyl diphosphate + ADP + phosphate + CO2. The protein operates within steroid biosynthesis; cholesterol biosynthesis. In terms of biological role, catalyzes the ATP dependent decarboxylation of (R)-5-diphosphomevalonate to form isopentenyl diphosphate (IPP). Functions in the mevalonate (MVA) pathway leading to isopentenyl diphosphate (IPP), a key precursor for the biosynthesis of isoprenoids and sterol synthesis. This Bos taurus (Bovine) protein is Diphosphomevalonate decarboxylase (MVD).